The primary structure comprises 545 residues: G-protein coupled receptor 161 (545 aa).

The Extracellular portion of the chain corresponds to 1–46; that stretch reads MDFVQHALLTASRGALTMSLNSSLSYRKELSNLTATEGGEGGAVSE. N-linked (GlcNAc...) asparagine glycans are attached at residues N21 and N32. The chain crosses the membrane as a helical span at residues 47–67; it reads FIAIIIITVLVCLGNLVIVVT. Residues 68–80 lie on the Cytoplasmic side of the membrane; sequence LYKKSYLLTLSNK. Residues 81–101 traverse the membrane as a helical segment; the sequence is FVFSLTLSNFLLSVLVLPFVV. At 102–117 the chain is on the extracellular side; sequence TSSIRREWIFGVVWCN. Residues C116 and C194 are joined by a disulfide bond. An N-linked (GlcNAc...) asparagine glycan is attached at N117. A helical transmembrane segment spans residues 118–139; the sequence is FSALLYLLISSASMLTLGVIAI. Residues 140–159 lie on the Cytoplasmic side of the membrane; the sequence is DRYYAVLYPMVYPMKITGNR. Residues 160-180 traverse the membrane as a helical segment; it reads AVMALVYIWLHSLIGCLPPLF. Over 181–205 the chain is Extracellular; the sequence is GWSSVEFDEFKWMCVAAWHQEPGYT. The chain crosses the membrane as a helical span at residues 206–226; that stretch reads IFWQIWCALFPFLIMLVCYGF. The Cytoplasmic segment spans residues 227–285; sequence IFRVARVKARKVHCGTVVTVEEDSQRSGRKNSSTSTSSSGSRRNALQGVVYSANQCKAL. A helical membrane pass occupies residues 286–306; it reads ITILVVIGAFMVTWGPYMVVI. The Extracellular segment spans residues 307–322; that stretch reads TSEALWGKNCVSPTLE. A helical membrane pass occupies residues 323–343; it reads TWATWLSFTSAICHPLIYGLW. Residues 344 to 545 are Cytoplasmic-facing; sequence NKTVRKELLG…EGNVLAAEQR (202 aa).

The protein belongs to the G-protein coupled receptor 1 family.

The protein localises to the cell projection. It localises to the cilium membrane. It is found in the cell membrane. Key negative regulator of Shh signaling, which promotes the processing of GLI3 into GLI3R during neural tube development. Recruited by TULP3 and the IFT-A complex to primary cilia and acts as a regulator of the PKA-dependent basal repression machinery in Shh signaling by increasing cAMP levels, leading to promote the PKA-dependent processing of GLI3 into GLI3R and repress the Shh signaling. In presence of SHH, it is removed from primary cilia and is internalized into recycling endosomes, preventing its activity and allowing activation of the Shh signaling. Its ligand is unknown. The chain is G-protein coupled receptor 161 (Gpr161) from Mus musculus (Mouse).